The following is a 273-amino-acid chain: Bifunctional protein FolD (273 aa).

Residues 155–157, Ser-180, and Thr-221 contribute to the NADP(+) site; that span reads GRS.

It belongs to the tetrahydrofolate dehydrogenase/cyclohydrolase family. In terms of assembly, homodimer.

It carries out the reaction (6R)-5,10-methylene-5,6,7,8-tetrahydrofolate + NADP(+) = (6R)-5,10-methenyltetrahydrofolate + NADPH. It catalyses the reaction (6R)-5,10-methenyltetrahydrofolate + H2O = (6R)-10-formyltetrahydrofolate + H(+). Its pathway is one-carbon metabolism; tetrahydrofolate interconversion. Its function is as follows. Catalyzes the oxidation of 5,10-methylenetetrahydrofolate to 5,10-methenyltetrahydrofolate and then the hydrolysis of 5,10-methenyltetrahydrofolate to 10-formyltetrahydrofolate. The polypeptide is Bifunctional protein FolD (Coprothermobacter proteolyticus (strain ATCC 35245 / DSM 5265 / OCM 4 / BT)).